Here is a 314-residue protein sequence, read N- to C-terminus: Acetaldehyde dehydrogenase (314 aa).

Position 14–17 (14–17 (SGNI)) interacts with NAD(+). Residue Cys-132 is the Acyl-thioester intermediate of the active site. Residues 163-171 (SAGPGTRAN) and Asn-291 each bind NAD(+).

It belongs to the acetaldehyde dehydrogenase family.

It carries out the reaction acetaldehyde + NAD(+) + CoA = acetyl-CoA + NADH + H(+). The sequence is that of Acetaldehyde dehydrogenase from Polaromonas sp. (strain JS666 / ATCC BAA-500).